Consider the following 278-residue polypeptide: 4-deoxy-L-threo-5-hexosulose-uronate ketol-isomerase (278 aa).

Residues His196, His198, Glu203, and His245 each contribute to the Zn(2+) site.

Belongs to the KduI family. Zn(2+) serves as cofactor.

The enzyme catalyses 5-dehydro-4-deoxy-D-glucuronate = 3-deoxy-D-glycero-2,5-hexodiulosonate. It participates in glycan metabolism; pectin degradation; 2-dehydro-3-deoxy-D-gluconate from pectin: step 4/5. In terms of biological role, catalyzes the isomerization of 5-dehydro-4-deoxy-D-glucuronate to 3-deoxy-D-glycero-2,5-hexodiulosonate. This Salmonella typhimurium (strain LT2 / SGSC1412 / ATCC 700720) protein is 4-deoxy-L-threo-5-hexosulose-uronate ketol-isomerase.